The sequence spans 497 residues: 4,4'-diaponeurosporene oxygenase (497 aa).

Residue 7–19 (VIGGGLGGISAAI) coordinates FAD.

It belongs to the carotenoid/retinoid oxidoreductase family. CrtP subfamily. Requires FAD as cofactor.

The catalysed reaction is all-trans-4,4'-diaponeurosporene + 2 AH2 + 2 O2 = 4,4'-diaponeurosporenal + 2 A + 3 H2O. The protein operates within carotenoid biosynthesis; staphyloxanthin biosynthesis; staphyloxanthin from farnesyl diphosphate: step 3/5. Involved in the biosynthesis of the yellow-orange carotenoid staphyloxanthin, which plays a role in the virulence via its protective function against oxidative stress. Catalyzes the oxidation of the terminal methyl side group of 4,4'-diaponeurosporene to form 4,4'-diaponeurosporen-4-al. This is 4,4'-diaponeurosporene oxygenase from Staphylococcus aureus (strain MW2).